We begin with the raw amino-acid sequence, 298 residues long: Probable endonuclease 4 (298 aa).

9 residues coordinate Zn(2+): histidine 69, histidine 111, glutamate 146, aspartate 180, histidine 183, histidine 215, aspartate 228, histidine 230, and glutamate 260.

This sequence belongs to the AP endonuclease 2 family. The cofactor is Zn(2+).

The catalysed reaction is Endonucleolytic cleavage to 5'-phosphooligonucleotide end-products.. Endonuclease IV plays a role in DNA repair. It cleaves phosphodiester bonds at apurinic or apyrimidinic (AP) sites, generating a 3'-hydroxyl group and a 5'-terminal sugar phosphate. The polypeptide is Probable endonuclease 4 (Bacillus cereus (strain B4264)).